A 271-amino-acid polypeptide reads, in one-letter code: Phosphate import ATP-binding protein PstB 2 (271 aa).

The 242-residue stretch at 25–266 folds into the ABC transporter domain; the sequence is MATEDLHVYY…PQQKQTEDYI (242 aa). 57–64 provides a ligand contact to ATP; the sequence is GPSGCGKS.

It belongs to the ABC transporter superfamily. Phosphate importer (TC 3.A.1.7) family. In terms of assembly, the complex is composed of two ATP-binding proteins (PstB), two transmembrane proteins (PstC and PstA) and a solute-binding protein (PstS).

The protein localises to the cell membrane. The catalysed reaction is phosphate(out) + ATP + H2O = ADP + 2 phosphate(in) + H(+). Functionally, part of the ABC transporter complex PstSACB involved in phosphate import. Responsible for energy coupling to the transport system. In Listeria monocytogenes serotype 4b (strain F2365), this protein is Phosphate import ATP-binding protein PstB 2.